Here is a 164-residue protein sequence, read N- to C-terminus: CASP-like protein 1C1 (164 aa).

The Cytoplasmic portion of the chain corresponds to 1-15 (MGDVEIPPLVKQIVR). A helical membrane pass occupies residues 16–36 (GLRGLAFLATILATSFMAASH). Residues 37–56 (ERAIFPFDYKADYTDLMLFK) lie on the Extracellular side of the membrane. The chain crosses the membrane as a helical span at residues 57-77 (AFLGANIAASLYSFFFVCLPP). Residues 78 to 83 (KSLLWR) are Cytoplasmic-facing. The chain crosses the membrane as a helical span at residues 84–104 (LAIVLDVIMFGLLVAMDSAAI). Residues 105–132 (AAAYLHKHGDSQAFWPPICSQVPTYCYR) are Extracellular-facing. Residues 133 to 153 (VILAISIGFGGVFMFLLIIII) form a helical membrane-spanning segment. Topologically, residues 154–164 (SISVILNPLLV) are cytoplasmic.

It belongs to the Casparian strip membrane proteins (CASP) family. In terms of assembly, homodimer and heterodimers.

Its subcellular location is the cell membrane. This Populus trichocarpa (Western balsam poplar) protein is CASP-like protein 1C1.